We begin with the raw amino-acid sequence, 365 residues long: Cyclin-O protein B (365 aa).

Residues 22-64 (SGKRKRDSVYSPGDATPGDRGEGEPKCPSVGTKKRAKYSRHRK) form a disordered region. Basic residues predominate over residues 53–64 (TKKRAKYSRHRK).

It belongs to the cyclin family.

It localises to the cytoplasm. Its function is as follows. Specifically required for generation of multiciliated cells, possibly by promoting a cell cycle state compatible with centriole amplification and maturation. Acts downstream of mcidas to promote mother centriole amplification and maturation in preparation for apical docking. This chain is Cyclin-O protein B (ccno-b), found in Xenopus laevis (African clawed frog).